We begin with the raw amino-acid sequence, 349 residues long: Homeobox-leucine zipper protein HOX7 (349 aa).

A disordered region spans residues 42–186; sequence RATRRDEQDD…PKQKSDLANR (145 aa). 2 stretches are compositionally biased toward polar residues: residues 89 to 99 and 121 to 135; these read SAETGSANSEM and SSPSSMQEASTRQQV. Residues 150–209 constitute a DNA-binding region (homeobox); it reads GARKKLRLSKEQSSFLEDSFKEHSTLTPKQKSDLANRLNLRPRQVEVWFQNRRARTKLKQ. A compositionally biased stretch (basic and acidic residues) spans 167–183; it reads DSFKEHSTLTPKQKSDL. Residues 208–252 are leucine-zipper; the sequence is KQTEVDCEHLKRCCERLTRENRRLQREVAELRGALRTTTSSYPPL.

It belongs to the HD-ZIP homeobox family. Class II subfamily. In terms of assembly, homodimer. May form a heterodimer with HOX1, HOX2 or HOX3. As to expression, expressed in seedlings, roots, leaves, nodes, internodes, flowers and embryo.

Its subcellular location is the nucleus. Functionally, probable transcription factor that binds to the DNA sequence 5'-CAAT[GC]ATTG-3'. This chain is Homeobox-leucine zipper protein HOX7 (HOX7), found in Oryza sativa subsp. indica (Rice).